A 447-amino-acid polypeptide reads, in one-letter code: Trigger factor (447 aa).

The PPIase FKBP-type domain maps to 188–273; the sequence is GDKLVIDFEG…VNDIQVAEDF (86 aa).

The protein belongs to the FKBP-type PPIase family. Tig subfamily.

It is found in the cytoplasm. The catalysed reaction is [protein]-peptidylproline (omega=180) = [protein]-peptidylproline (omega=0). Involved in protein export. Acts as a chaperone by maintaining the newly synthesized protein in an open conformation. Functions as a peptidyl-prolyl cis-trans isomerase. The protein is Trigger factor of Wolbachia sp. subsp. Brugia malayi (strain TRS).